The chain runs to 217 residues: Adenylate kinase (217 aa).

10–15 (GAGKGT) serves as a coordination point for ATP. The NMP stretch occupies residues 30–59 (STGDMFRAAMKEGTPLGLQAKEYIDRGDLV). AMP-binding positions include threonine 31, arginine 36, 57-59 (DLV), 85-88 (GFPR), and glutamine 92. An LID region spans residues 126–163 (GRRICRNCGATYHLVFHPPAQPGVCDKCGGELYQRPDD). Arginine 127 lines the ATP pocket. Residues cysteine 130 and cysteine 133 each coordinate Zn(2+). Residue 136-137 (TY) coordinates ATP. Positions 150 and 153 each coordinate Zn(2+). AMP-binding residues include arginine 160 and arginine 171. Residue glutamine 199 participates in ATP binding.

Belongs to the adenylate kinase family. As to quaternary structure, monomer.

It localises to the cytoplasm. It carries out the reaction AMP + ATP = 2 ADP. The protein operates within purine metabolism; AMP biosynthesis via salvage pathway; AMP from ADP: step 1/1. Catalyzes the reversible transfer of the terminal phosphate group between ATP and AMP. Plays an important role in cellular energy homeostasis and in adenine nucleotide metabolism. The sequence is that of Adenylate kinase from Geobacillus thermodenitrificans (strain NG80-2).